Consider the following 1353-residue polypeptide: Patatin-like phospholipase domain-containing protein ZK370.4 (1353 aa).

The helical transmembrane segment at 12 to 32 threads the bilayer; it reads IFLVTFIYNHVLLILFTVCII. Low complexity predominate over residues 49 to 64; the sequence is TPSSASSSATPSSRNS. 2 disordered regions span residues 49–188 and 199–218; these read TPSS…STAF and SRSYFRQNQENNKDTRVRPP. Polar residues predominate over residues 91 to 123; it reads SPKSGTPTNTQTIEPPTSLNLNMVNSASGSNLS. Basic residues-rich tracts occupy residues 126–138 and 170–184; these read RRMRKRDWAKKLY and PRRRSKHGNSSRRRQ. A nucleoside 3',5'-cyclic phosphate contacts are provided by residues 245-372, 444-581, and 570-692; these read LKML…VITR, FGLV…VLRR, and IYLP…LGQY. Positions 942 to 1108 constitute a PNPLA domain; the sequence is LVLGGGGARG…VNNVPADVMR (167 aa). The short motif at 946-951 is the GXGXXG element; that stretch reads GGGARG. The short motif at 973–977 is the GXSXG element; sequence GTSIG. The active-site Nucleophile is S975. The Proton acceptor role is filled by D1095. The DGA/G signature appears at 1095 to 1097; the sequence is DGG. 3 disordered regions span residues 1230 to 1249, 1274 to 1293, and 1305 to 1353; these read EKETRKFKRQQSRREKPDVS, SMSLNPSANGPVGRAGDHFL, and YEEE…PPSS. Positions 1328–1337 are enriched in low complexity; that stretch reads GPPSSSSSGG.

This sequence belongs to the NTE family.

Its subcellular location is the membrane. This chain is Patatin-like phospholipase domain-containing protein ZK370.4, found in Caenorhabditis elegans.